An 851-amino-acid polypeptide reads, in one-letter code: Venom phosphodiesterase (851 aa).

The N-terminal stretch at 1–23 (MIQQKVLFISLVAVALGLGLGLG) is a signal peptide. SMB domains follow at residues 30 to 73 (PQVS…VLPT) and 74 to 118 (QSWS…GETS). Intrachain disulfides connect Cys-34–Cys-38, Cys-34–Cys-51, Cys-38–Cys-69, Cys-49–Cys-51, Cys-49–Cys-62, Cys-55–Cys-61, Cys-62–Cys-69, Cys-78–Cys-83, Cys-78–Cys-95, Cys-83–Cys-113, Cys-93–Cys-95, Cys-93–Cys-106, Cys-99–Cys-105, Cys-106–Cys-113, Cys-124–Cys-170, and Cys-132–Cys-344. Asn-39 carries N-linked (GlcNAc...) asparagine glycosylation. A Cell attachment site motif is present at residues 58-60 (RQA). A divalent metal cation-binding residues include Asp-147 and Thr-185. The active-site AMP-threonine intermediate is the Thr-185. Residues Asn-216, Asn-259, and Asn-270 are each glycosylated (N-linked (GlcNAc...) asparagine). AMP is bound at residue Lys-271. Positions 305, 309, 352, and 353 each coordinate a divalent metal cation. His-309 is an AMP binding site. Cystine bridges form between Cys-360–Cys-457, Cys-408–Cys-793, Cys-541–Cys-599, Cys-554–Cys-654, Cys-556–Cys-639, and Cys-762–Cys-772. Asn-405 carries an N-linked (GlcNAc...) asparagine glycan. An a divalent metal cation-binding site is contributed by His-462. Residues Asn-512, Asn-594, and Asn-745 are each glycosylated (N-linked (GlcNAc...) asparagine).

Belongs to the nucleotide pyrophosphatase/phosphodiesterase family. Monomer cleaved in two subunits; disulfide-linked. Is synthesized as a single-chain protein and is subsequently cleaved to form a two-subunit protein held together with disulfide bonds. A divalent metal cation is required as a cofactor. In terms of tissue distribution, expressed by venom gland.

It localises to the secreted. It carries out the reaction ADP + H2O = AMP + phosphate + H(+). Functionally, hydrolyzes ADP with high activity. Shows weak or no activity on 5'-AMP, 5'-GMP, 3'-AMP, ATP, cAMP, and cGMP. Is devoid of monophosphatase and proteinase activities. Dose-dependently inhibits platelet aggregation induced by ADP (IC(50)=0.99 uM) and collagen (IC(50)=1.4 uM). This chain is Venom phosphodiesterase, found in Macrovipera lebetinus (Levantine viper).